A 262-amino-acid polypeptide reads, in one-letter code: Type III pantothenate kinase (262 aa).

5-12 (DAGNTRSK) lines the ATP pocket. Residues Y102 and 110-113 (GSDR) contribute to the substrate site. D112 serves as the catalytic Proton acceptor. Position 132 (D132) interacts with K(+). T135 is a binding site for ATP. T190 provides a ligand contact to substrate.

Belongs to the type III pantothenate kinase family. In terms of assembly, homodimer. The cofactor is NH4(+). K(+) serves as cofactor.

Its subcellular location is the cytoplasm. The enzyme catalyses (R)-pantothenate + ATP = (R)-4'-phosphopantothenate + ADP + H(+). It participates in cofactor biosynthesis; coenzyme A biosynthesis; CoA from (R)-pantothenate: step 1/5. Its function is as follows. Catalyzes the phosphorylation of pantothenate (Pan), the first step in CoA biosynthesis. In Idiomarina loihiensis (strain ATCC BAA-735 / DSM 15497 / L2-TR), this protein is Type III pantothenate kinase.